The chain runs to 508 residues: Glycerol kinase (508 aa).

Threonine 14 contacts ADP. Positions 14, 15, and 16 each coordinate ATP. Position 14 (threonine 14) interacts with sn-glycerol 3-phosphate. Arginine 18 lines the ADP pocket. The sn-glycerol 3-phosphate site is built by arginine 84, glutamate 85, and tyrosine 136. Glycerol-binding residues include arginine 84, glutamate 85, and tyrosine 136. The residue at position 232 (histidine 232) is a Phosphohistidine; by HPr. Aspartate 246 contributes to the sn-glycerol 3-phosphate binding site. 2 residues coordinate glycerol: aspartate 246 and glutamine 247. The ADP site is built by threonine 268 and glycine 311. Residues threonine 268, glycine 311, glutamine 315, and glycine 412 each contribute to the ATP site. Positions 412 and 416 each coordinate ADP.

This sequence belongs to the FGGY kinase family. Homotetramer and homodimer (in equilibrium). Post-translationally, the phosphoenolpyruvate-dependent sugar phosphotransferase system (PTS), including enzyme I, and histidine-containing protein (HPr) are required for the phosphorylation, which leads to the activation of the enzyme.

It catalyses the reaction glycerol + ATP = sn-glycerol 3-phosphate + ADP + H(+). It participates in polyol metabolism; glycerol degradation via glycerol kinase pathway; sn-glycerol 3-phosphate from glycerol: step 1/1. With respect to regulation, activated by phosphorylation and inhibited by fructose 1,6-bisphosphate (FBP). Functionally, key enzyme in the regulation of glycerol uptake and metabolism. Catalyzes the phosphorylation of glycerol to yield sn-glycerol 3-phosphate. This is Glycerol kinase from Streptococcus pyogenes serotype M4 (strain MGAS10750).